We begin with the raw amino-acid sequence, 801 residues long: MFTHFSTHFHLPSSSSLFFLHPFYKSSSLGAVSFVAKDKEKRCRAISKSRTQEYEGVFQTNVATLKLSEINVEDVIVIDDEEEQDIRVGLVNKIKSILSSLEDGEITISAYDTAWVALVEDVNAISTPQFPSSLEWIAKNQLQDGSWGDSRLFSAHDRIINTLACVIALRSWNMHSEKCDKGMIFFRENLSKLENENEEHMPIGFEVAFPSLLEGARGIKPLMCPNDSPILKNIFEKRDEKLTRIPKEIMHKVPTTLLHSLEGMSGLDWKQLLKLQSQDGSFLFSPSSTAFALMQTKDGNCLKYLNNVVKKFNGGVPNVYPVDLFEHIWVVDRLERLGISRFFRHEIKDCMNYVSKIWSEKGICWARNSNVQDIDDTAMAFRLLRLHGHQVSAHVFKHFERNGEFFCFAGQCTQAVTGMYNLFRASQVLFPGEKILEHAKHFSAKVLKEKREANELIDKWIIMKNLPEEVGYALDMPWYANLDRIETRFYIDQYGAESDVWIGKTLYRMAYVNNNNYLELAKLDYNNCQAQHLIEWNVIQTWYLESRLGEFGLSKRDLLLAYFLATGSIFEPERSHERLAWAKTTALLETIKCYVRNEDLRKDFAKKFNDHIDVRDYSIARRMKRNKTEHELVESLFATIGEISWDVRLSYGHEIGYDMHQCWKKWLSSWQSEGDKCEGEAELLIQIINLCSNHWISEGPSMQSTIQHLLQLTNSICHKLSCYQKDKELKGISCQENITNSEVESKMQELVQMVFQKCPNDIDFNVKNTFFTIAKSFYYAAFCDSRTINFHIAKVLFEKVV.

Residue K241 coordinates substrate. Mg(2+) is bound by residues D373 and D375. The DXDD motif motif lies at 373-376 (DIDD). Substrate is bound at residue K459.

The protein belongs to the terpene synthase family. It depends on Mg(2+) as a cofactor.

It localises to the plastid. Its subcellular location is the chloroplast. It carries out the reaction (2E,6E,10E)-geranylgeranyl diphosphate = ent-copalyl diphosphate. It participates in plant hormone biosynthesis; gibberellin biosynthesis. Functionally, catalyzes the conversion of geranylgeranyl diphosphate to the gibberellin precursor ent-copalyl diphosphate. The chain is Ent-copalyl diphosphate synthase, chloroplastic from Pisum sativum (Garden pea).